Here is a 436-residue protein sequence, read N- to C-terminus: Amino acid transporter AVT3C (436 aa).

Polar residues predominate over residues Met1–Thr13. Residues Met1–Arg21 form a disordered region. The Cytoplasmic portion of the chain corresponds to Met1–Lys38. The chain crosses the membrane as a helical span at residues Thr39–Phe59. Residues Lys60–Leu65 lie on the Vacuolar side of the membrane. A helical membrane pass occupies residues Met66 to Val86. The Cytoplasmic portion of the chain corresponds to Tyr87–Arg118. A helical transmembrane segment spans residues Ile119–Phe139. The Vacuolar portion of the chain corresponds to Ile140–Glu166. A helical transmembrane segment spans residues Phe167–Leu187. Topologically, residues Asn188–His195 are cytoplasmic. A helical transmembrane segment spans residues Leu196–Val216. The Vacuolar portion of the chain corresponds to Glu217–Asp228. A helical transmembrane segment spans residues Val229 to Phe249. Residues Glu250–Ala273 lie on the Cytoplasmic side of the membrane. A helical membrane pass occupies residues Leu274–Phe294. Topologically, residues Gly295 to Gly309 are vacuolar. The helical transmembrane segment at Leu310 to Met330 threads the bilayer. Over Met331–Arg352 the chain is Cytoplasmic. Residues Trp353 to Leu373 form a helical membrane-spanning segment. Residues Ser374–Val376 lie on the Vacuolar side of the membrane. A helical membrane pass occupies residues Gly377 to Phe397. Over Lys398 to Ala411 the chain is Cytoplasmic. Residues Ile412–Phe432 traverse the membrane as a helical segment. The Vacuolar segment spans residues Ser433–Val436.

This sequence belongs to the amino acid/polyamine transporter 2 family. Amino acid/auxin permease (AAAP) (TC 2.A.18.8) subfamily. Ubiquitous.

The protein localises to the vacuole membrane. In terms of biological role, translocates preferentially neutral amino acids from the vacuole to the cytoplasm. The sequence is that of Amino acid transporter AVT3C from Arabidopsis thaliana (Mouse-ear cress).